The primary structure comprises 566 residues: Alpha-keto-acid decarboxylase (566 aa).

E61 lines the thiamine diphosphate pocket. The tract at residues 396–478 (TSFYGMADHR…VVVNNDGYTV (83 aa)) is thiamine pyrophosphate binding. Mg(2+) is bound by residues D446, N473, and G475.

The protein belongs to the TPP enzyme family. A metal cation serves as cofactor. Requires thiamine diphosphate as cofactor.

Functionally, decarboxylates branched-chain and aromatic alpha-keto acids to aldehydes. The chain is Alpha-keto-acid decarboxylase (kdc) from Mycobacterium ulcerans (strain Agy99).